A 202-amino-acid polypeptide reads, in one-letter code: Imidazole glycerol phosphate synthase subunit HisH (202 aa).

Residues 3 to 202 (RIVILDYGLG…KILKNFVDMC (200 aa)) form the Glutamine amidotransferase type-1 domain. Catalysis depends on Cys-79, which acts as the Nucleophile. Catalysis depends on residues His-183 and Glu-185.

In terms of assembly, heterodimer of HisH and HisF.

It localises to the cytoplasm. The enzyme catalyses 5-[(5-phospho-1-deoxy-D-ribulos-1-ylimino)methylamino]-1-(5-phospho-beta-D-ribosyl)imidazole-4-carboxamide + L-glutamine = D-erythro-1-(imidazol-4-yl)glycerol 3-phosphate + 5-amino-1-(5-phospho-beta-D-ribosyl)imidazole-4-carboxamide + L-glutamate + H(+). It catalyses the reaction L-glutamine + H2O = L-glutamate + NH4(+). It participates in amino-acid biosynthesis; L-histidine biosynthesis; L-histidine from 5-phospho-alpha-D-ribose 1-diphosphate: step 5/9. Its function is as follows. IGPS catalyzes the conversion of PRFAR and glutamine to IGP, AICAR and glutamate. The HisH subunit catalyzes the hydrolysis of glutamine to glutamate and ammonia as part of the synthesis of IGP and AICAR. The resulting ammonia molecule is channeled to the active site of HisF. This Methanosarcina barkeri (strain Fusaro / DSM 804) protein is Imidazole glycerol phosphate synthase subunit HisH.